The primary structure comprises 329 residues: Bile salt hydrolase/transferase (329 aa).

The active-site Nucleophile; acyl-thioester intermediate is C2. Residues C2 and R18 each contribute to the deoxycholate site. A taurine-binding site is contributed by N82.

This sequence belongs to the peptidase C59 family. As to quaternary structure, homotetramer. The tetramer consists of a dimer of dimers.

It carries out the reaction glycocholate + H2O = cholate + glycine. The catalysed reaction is cholate + taurine = taurocholate + H2O. It catalyses the reaction taurodeoxycholate + H2O = deoxycholate + taurine. The enzyme catalyses glycodeoxycholate + H2O = deoxycholate + glycine. It carries out the reaction chenodeoxycholate + glycine = glycochenodeoxycholate + H2O. The catalysed reaction is taurochenodeoxycholate + H2O = chenodeoxycholate + taurine. It catalyses the reaction an L-alpha-amino acid + cholate = an N-choloyl-L-alpha-amino acid + H2O. The enzyme catalyses an L-alpha-amino acid + taurocholate = an N-choloyl-L-alpha-amino acid + taurine. It carries out the reaction glycocholate + an L-alpha-amino acid = an N-choloyl-L-alpha-amino acid + glycine. The catalysed reaction is cholate + L-histidine = L-histidocholate + H2O. It catalyses the reaction taurocholate + L-histidine = L-histidocholate + taurine. The enzyme catalyses glycocholate + L-histidine = L-histidocholate + glycine. It carries out the reaction cholate + L-arginine = L-arginocholate + H2O. The catalysed reaction is taurocholate + L-arginine = L-arginocholate + taurine. It catalyses the reaction glycocholate + L-arginine = L-arginocholate + glycine. The enzyme catalyses cholate + L-phenylalanine = L-phenylalanocholate + H2O. It carries out the reaction taurocholate + L-phenylalanine = L-phenylalanocholate + taurine. It functions in the pathway lipid metabolism; bile acid biosynthesis. Its function is as follows. Possesses dual functions in bile acid metabolism. Acts as a bile salt hydrolase that catalyzes the deconjugation of glycine- and taurine-linked bile salts, which occurs naturally in the intestines of humans, releasing amino acid residues and deconjugated bile salts (bile acids). Can hydrolyze the amide bond in major human conjugated bile salts, such as glycocholate (GCA), taurocholate (TCA) and taurodeoxycholate (TDCA). Shows a slight preference for taurine-conjugated bile acids as substrates. Also acts as an amine N-acyltransferase that conjugates a wide variety of amino acids to conjugated and non-conjugated bile acids, thus producing bacterial bile acid amidates (BBAAs) - also named microbially conjugated bile acids (MCBAs) - in the gastrointestinal tract. These BBAAs may facilitate communication between the microbiota and host through the activation of human ligand-activated transcription factors. The polypeptide is Bile salt hydrolase/transferase (cbh) (Clostridium perfringens (strain 13 / Type A)).